Reading from the N-terminus, the 345-residue chain is Delta(1)-pyrroline-2-carboxylate reductase (345 aa).

Serine 47 acts as the Charge relay system in catalysis. Residue histidine 48 is the Proton donor of the active site. Position 52 (arginine 52) interacts with substrate. 121–125 contacts NADP(+); the sequence is HFSAL. Threonine 161 is a substrate binding site. 179-181 lines the NADP(+) pocket; it reads DFA. Residue 187–188 participates in substrate binding; that stretch reads RG. Catalysis depends on glutamate 189, which acts as the Charge relay system. NADP(+)-binding positions include 230-231 and 305-311; these read HK and RLPSGRR.

Belongs to the LDH2/MDH2 oxidoreductase family. Homodimer.

The catalysed reaction is L-proline + NAD(+) = 1-pyrroline-2-carboxylate + NADH + H(+). It carries out the reaction L-proline + NADP(+) = 1-pyrroline-2-carboxylate + NADPH + H(+). Functionally, catalyzes the reduction of Delta(1)-pyrroline-2-carboxylate (Pyr2C) to L-proline, using NADPH as the electron donor. Is likely involved in a degradation pathway that converts trans-3-hydroxy-L-proline (t3LHyp) to L-proline, which would allow A.tumefaciens to grow on t3LHyp as a sole carbon source. This is Delta(1)-pyrroline-2-carboxylate reductase from Agrobacterium fabrum (strain C58 / ATCC 33970) (Agrobacterium tumefaciens (strain C58)).